A 70-amino-acid chain; its full sequence is uncharacterized protein (70 aa).

This is an uncharacterized protein from Haloarcula hispanica (His1V).